Consider the following 528-residue polypeptide: Lanosterol 14-alpha demethylase (528 aa).

Residue cysteine 470 participates in heme binding.

The protein belongs to the cytochrome P450 family. It depends on heme as a cofactor.

It localises to the membrane. The enzyme catalyses a 14alpha-methyl steroid + 3 reduced [NADPH--hemoprotein reductase] + 3 O2 = a Delta(14) steroid + formate + 3 oxidized [NADPH--hemoprotein reductase] + 4 H2O + 4 H(+). The catalysed reaction is a 14alpha-methyl steroid + reduced [NADPH--hemoprotein reductase] + O2 = a 14alpha-hydroxymethyl steroid + oxidized [NADPH--hemoprotein reductase] + H2O + H(+). It catalyses the reaction a 14alpha-hydroxymethyl steroid + reduced [NADPH--hemoprotein reductase] + O2 = a 14alpha-formyl steroid + oxidized [NADPH--hemoprotein reductase] + 2 H2O + H(+). It carries out the reaction a 14alpha-formyl steroid + reduced [NADPH--hemoprotein reductase] + O2 = a Delta(14) steroid + formate + oxidized [NADPH--hemoprotein reductase] + H2O + 2 H(+). The enzyme catalyses lanosterol + 3 reduced [NADPH--hemoprotein reductase] + 3 O2 = 4,4-dimethyl-5alpha-cholesta-8,14,24-trien-3beta-ol + formate + 3 oxidized [NADPH--hemoprotein reductase] + 4 H2O + 4 H(+). The catalysed reaction is lanosterol + reduced [NADPH--hemoprotein reductase] + O2 = 32-hydroxylanosterol + oxidized [NADPH--hemoprotein reductase] + H2O + H(+). It catalyses the reaction 32-hydroxylanosterol + reduced [NADPH--hemoprotein reductase] + O2 = 32-oxolanosterol + oxidized [NADPH--hemoprotein reductase] + 2 H2O + H(+). It carries out the reaction 32-oxolanosterol + reduced [NADPH--hemoprotein reductase] + O2 = 4,4-dimethyl-5alpha-cholesta-8,14,24-trien-3beta-ol + formate + oxidized [NADPH--hemoprotein reductase] + H2O + 2 H(+). The enzyme catalyses eburicol + 3 reduced [NADPH--hemoprotein reductase] + 3 O2 = 14-demethyleburicol + formate + 3 oxidized [NADPH--hemoprotein reductase] + 4 H2O + 4 H(+). The catalysed reaction is eburicol + reduced [NADPH--hemoprotein reductase] + O2 = 32-hydroxyeburicol + oxidized [NADPH--hemoprotein reductase] + H2O + H(+). It catalyses the reaction 32-hydroxyeburicol + reduced [NADPH--hemoprotein reductase] + O2 = 32-oxoeburicol + oxidized [NADPH--hemoprotein reductase] + 2 H2O + H(+). It carries out the reaction 32-oxoeburicol + reduced [NADPH--hemoprotein reductase] + O2 = 14-demethyleburicol + formate + oxidized [NADPH--hemoprotein reductase] + H2O + 2 H(+). It participates in steroid biosynthesis; zymosterol biosynthesis; zymosterol from lanosterol: step 1/6. In terms of biological role, sterol 14alpha-demethylase that plays a critical role in the third module of ergosterol biosynthesis pathway, being ergosterol the major sterol component in fungal membranes that participates in a variety of functions. The third module or late pathway involves the ergosterol synthesis itself through consecutive reactions that mainly occur in the endoplasmic reticulum (ER) membrane. In filamentous fungi, during the initial step of this module, lanosterol (lanosta-8,24-dien-3beta-ol) can be metabolized to eburicol. Sterol 14alpha-demethylase catalyzes the three-step oxidative removal of the 14alpha-methyl group (C-32) of both these sterols in the form of formate, and converts eburicol and lanosterol to 14-demethyleburicol (4,4,24-trimethylergosta-8,14,24(28)-trienol) and 4,4-dimethyl-5alpha-cholesta-8,14,24-trien-3beta-ol, respectively, which are further metabolized by other enzymes in the pathway to ergosterol. Can also use substrates not intrinsic to fungi, such as 24,25-dihydrolanosterol (DHL), producing 4,4-dimethyl-8,14-cholestadien-3-beta-ol, but at lower rates than the endogenous substrates. The polypeptide is Lanosterol 14-alpha demethylase (ERG11) (Candida tropicalis (Yeast)).